A 574-amino-acid polypeptide reads, in one-letter code: Proline--tRNA ligase (574 aa).

This sequence belongs to the class-II aminoacyl-tRNA synthetase family. ProS type 1 subfamily. Homodimer.

Its subcellular location is the cytoplasm. It catalyses the reaction tRNA(Pro) + L-proline + ATP = L-prolyl-tRNA(Pro) + AMP + diphosphate. Functionally, catalyzes the attachment of proline to tRNA(Pro) in a two-step reaction: proline is first activated by ATP to form Pro-AMP and then transferred to the acceptor end of tRNA(Pro). As ProRS can inadvertently accommodate and process non-cognate amino acids such as alanine and cysteine, to avoid such errors it has two additional distinct editing activities against alanine. One activity is designated as 'pretransfer' editing and involves the tRNA(Pro)-independent hydrolysis of activated Ala-AMP. The other activity is designated 'posttransfer' editing and involves deacylation of mischarged Ala-tRNA(Pro). The misacylated Cys-tRNA(Pro) is not edited by ProRS. The chain is Proline--tRNA ligase from Ralstonia pickettii (strain 12J).